The chain runs to 165 residues: Leukotoxin-activating lysine-acyltransferase LktC (165 aa).

Active-site residues include His-22 and Asp-91.

This sequence belongs to the RTX toxin acyltransferase family.

It localises to the cytoplasm. It carries out the reaction a fatty acyl-[ACP] + L-lysyl-[protein] = N(6)-(fatty acyl)-L-lysyl-[protein] + holo-[ACP] + H(+). Involved in fatty acylation of the protoxin (LktA) at two internal lysine residues, thereby converting it to the active toxin. The chain is Leukotoxin-activating lysine-acyltransferase LktC (lktC) from Pasteurella haemolytica-like sp. (strain 5943B).